The sequence spans 531 residues: Zinc finger protein 692 (531 aa).

The segment covering 155-178 (EAQGLECEQRERTQETRLSRRVDS) has biased composition (basic and acidic residues). Disordered stretches follow at residues 155-249 (EAQG…PATL) and 287-307 (MTESLESPGSQAQSAPNPTWD). Acidic residues predominate over residues 186-206 (LGEDQDVEEEEEEEEEEEELL). Serine 231 carries the phosphoserine modification. Positions 290 to 303 (SLESPGSQAQSAPN) are enriched in polar residues. 5 consecutive C2H2-type zinc fingers follow at residues 327–352 (MPCDFPGCGRIFSNRQYLNHHKKYQH), 358–382 (FCCPEPACGKSFNFKKHLKEHVKLH), 388–410 (YICEFCARSFRTSSNLVIHRRIH), 416–438 (LQCEICGFTCRQKASLNWHRRKH), and 447–470 (FPCEFCGKRFEKPDSVVAHCSKSH). Phosphoserine is present on serine 469. A disordered region spans residues 474–531 (LPAQEPPGSLVSSPSISAPESLQSPEGASISTTSDSNPASSTSISSPGVPDPRNREKS). Residues 483–499 (LVSSPSISAPESLQSPE) are compositionally biased toward polar residues. Residues 502-520 (SISTTSDSNPASSTSISSP) show a composition bias toward low complexity.

The protein belongs to the krueppel C2H2-type zinc-finger protein family. Post-translationally, phosphorylation at Ser-469 results in loss of DNA-binding activity.

It is found in the nucleus. Functionally, may act as an transcriptional repressor for PCK1 gene expression, in turn may participate in the hepatic gluconeogenesis regulation through the activated AMPK signaling pathway. The sequence is that of Zinc finger protein 692 from Mus musculus (Mouse).